The sequence spans 397 residues: Ribosomal RNA large subunit methyltransferase I (397 aa).

The region spanning 2-80 (SAAIYLVKGR…QDVNRAFFVK (79 aa)) is the PUA domain.

It belongs to the methyltransferase superfamily. RlmI family.

Its subcellular location is the cytoplasm. It carries out the reaction cytidine(1962) in 23S rRNA + S-adenosyl-L-methionine = 5-methylcytidine(1962) in 23S rRNA + S-adenosyl-L-homocysteine + H(+). In terms of biological role, specifically methylates the cytosine at position 1962 (m5C1962) of 23S rRNA. This chain is Ribosomal RNA large subunit methyltransferase I, found in Vibrio vulnificus (strain YJ016).